The sequence spans 220 residues: Putative O-methyltransferase Mmcs_3995 (220 aa).

Residues Val-47, Glu-69, 71–72, Ser-77, Asp-95, and Val-96 each bind S-adenosyl-L-methionine; that span reads GT. Residue Asp-143 coordinates substrate. Asp-145 lines the S-adenosyl-L-methionine pocket.

The protein belongs to the class I-like SAM-binding methyltransferase superfamily. Cation-dependent O-methyltransferase family.

The chain is Putative O-methyltransferase Mmcs_3995 from Mycobacterium sp. (strain MCS).